The primary structure comprises 295 residues: Pyrroline-5-carboxylate reductase (295 aa).

This sequence belongs to the pyrroline-5-carboxylate reductase family.

It localises to the cytoplasm. It carries out the reaction L-proline + NADP(+) = (S)-1-pyrroline-5-carboxylate + NADPH + 2 H(+). The enzyme catalyses L-proline + NAD(+) = (S)-1-pyrroline-5-carboxylate + NADH + 2 H(+). It participates in amino-acid biosynthesis; L-proline biosynthesis; L-proline from L-glutamate 5-semialdehyde: step 1/1. Its function is as follows. Catalyzes the reduction of 1-pyrroline-5-carboxylate (PCA) to L-proline. The polypeptide is Pyrroline-5-carboxylate reductase (Mycobacterium tuberculosis (strain CDC 1551 / Oshkosh)).